Reading from the N-terminus, the 208-residue chain is RNA-binding protein KhpB (208 aa).

Positions T5–V55 are jag_N domain. The KH domain occupies I58–A135. The region spanning L140 to R208 is the R3H domain.

It belongs to the KhpB RNA-binding protein family. In terms of assembly, forms a complex with KhpA.

It localises to the cytoplasm. In terms of biological role, a probable RNA chaperone. Forms a complex with KhpA which binds to cellular RNA and controls its expression. Plays a role in peptidoglycan (PG) homeostasis and cell length regulation. This is RNA-binding protein KhpB from Bacillus subtilis (strain 168).